A 334-amino-acid polypeptide reads, in one-letter code: MAFNLRNRNFLKLLDFTPKEIHFLLDLSAELKRAKYAGTEQKTLQGKNIALIFEKSSTRTRCAFEVAAFDQGAQVSYIGPSGSQIGHKESMKDTARVLGRMYDGIQYRGFGQEIVEVLGQYAGVPVWNGLTDEFHPTQILADLLTMQEYGRSKQLHEMKFAYLGDARNNMGNSLMVGAAKMGMDIRLVAPKAYWPNDALVATCQEIAKQTGAKITLTEEVQEGVKGCDFLYTDVWVSMGEAADAWDERVALMKPYQVNMDVIKATGNPQVKFMHCLPAFHDDQTKVGQEIAAKYGMQGLEVTEEVFESEYSIVFDEAENRLHTIKAVMVATLGQ.

Carbamoyl phosphate is bound by residues 57–60 (STRT), Q84, R108, and 135–138 (HPTQ). Residues N169, D233, and 237-238 (SM) contribute to the L-ornithine site. Residues 275–276 (CL) and R320 contribute to the carbamoyl phosphate site.

Belongs to the aspartate/ornithine carbamoyltransferase superfamily. OTCase family.

It is found in the cytoplasm. The enzyme catalyses carbamoyl phosphate + L-ornithine = L-citrulline + phosphate + H(+). It functions in the pathway amino-acid biosynthesis; L-arginine biosynthesis; L-arginine from L-ornithine and carbamoyl phosphate: step 1/3. Functionally, reversibly catalyzes the transfer of the carbamoyl group from carbamoyl phosphate (CP) to the N(epsilon) atom of ornithine (ORN) to produce L-citrulline. The chain is Ornithine carbamoyltransferase from Vibrio cholerae serotype O1 (strain ATCC 39315 / El Tor Inaba N16961).